The following is a 154-amino-acid chain: Transcriptional repressor NrdR (154 aa).

A zinc finger spans residues 3-34 (CPFCSHNDSKVIDSRPTDEGQAIRRRRECISC). Residues 49–139 (LIVVKKNGNR…VYREFKDINT (91 aa)) enclose the ATP-cone domain.

It belongs to the NrdR family. Zn(2+) is required as a cofactor.

In terms of biological role, negatively regulates transcription of bacterial ribonucleotide reductase nrd genes and operons by binding to NrdR-boxes. This chain is Transcriptional repressor NrdR, found in Alkaliphilus oremlandii (strain OhILAs) (Clostridium oremlandii (strain OhILAs)).